The primary structure comprises 443 residues: Phosphoglucosamine mutase (443 aa).

Ser100 functions as the Phosphoserine intermediate in the catalytic mechanism. 4 residues coordinate Mg(2+): Ser100, Asp239, Asp241, and Asp243. At Ser100 the chain carries Phosphoserine.

It belongs to the phosphohexose mutase family. Mg(2+) serves as cofactor. Post-translationally, activated by phosphorylation.

It catalyses the reaction alpha-D-glucosamine 1-phosphate = D-glucosamine 6-phosphate. Functionally, catalyzes the conversion of glucosamine-6-phosphate to glucosamine-1-phosphate. The protein is Phosphoglucosamine mutase of Shewanella loihica (strain ATCC BAA-1088 / PV-4).